The chain runs to 251 residues: CDP-diacylglycerol pyrophosphatase (251 aa).

Residues 4–24 (AGLLFLVMIVIAVVAAGIGYW) form a helical membrane-spanning segment.

The protein belongs to the Cdh family.

The protein resides in the cell inner membrane. It carries out the reaction a CDP-1,2-diacyl-sn-glycerol + H2O = a 1,2-diacyl-sn-glycero-3-phosphate + CMP + 2 H(+). The protein operates within phospholipid metabolism; CDP-diacylglycerol degradation; phosphatidate from CDP-diacylglycerol: step 1/1. The chain is CDP-diacylglycerol pyrophosphatase from Escherichia coli O81 (strain ED1a).